A 346-amino-acid chain; its full sequence is Probable electron transfer flavoprotein subunit alpha, mitochondrial (346 aa).

FAD is bound at residue 285 to 313; that stretch reads LYVAIGISGAIQHLAGMKESKMIIAINKD.

This sequence belongs to the ETF alpha-subunit/FixB family. As to quaternary structure, heterodimer of an alpha and a beta subunit. FAD is required as a cofactor.

It localises to the mitochondrion matrix. In terms of biological role, the electron transfer flavoprotein serves as a specific electron acceptor for several dehydrogenases, including five acyl-CoA dehydrogenases, glutaryl-CoA and sarcosine dehydrogenase. It transfers the electrons to the main mitochondrial respiratory chain via ETF-ubiquinone oxidoreductase (ETF dehydrogenase). In Cryptococcus gattii serotype B (strain WM276 / ATCC MYA-4071) (Filobasidiella gattii), this protein is Probable electron transfer flavoprotein subunit alpha, mitochondrial (ETF1).